The sequence spans 146 residues: Hemoglobin subunit beta (146 aa).

Val1 bears the N-acetylvaline mark. In terms of domain architecture, Globin spans 2-146 (HLTADEKAAV…VATALAHKYH (145 aa)). Thr12 carries the phosphothreonine modification. Phosphoserine is present on Ser44. N6-acetyllysine is present on Lys59. Residue His63 participates in heme b binding. Lys82 carries the post-translational modification N6-acetyllysine. His92 lines the heme b pocket. An S-nitrosocysteine modification is found at Cys93. At Lys144 the chain carries N6-acetyllysine.

Belongs to the globin family. As to quaternary structure, heterotetramer of two alpha chains and two beta chains. Red blood cells.

Functionally, involved in oxygen transport from the lung to the various peripheral tissues. The sequence is that of Hemoglobin subunit beta (HBB) from Taphozous georgianus (Sharp-nosed tomb bat).